Reading from the N-terminus, the 1531-residue chain is MVGPVNIIVGSHVWIEDPGAAWIDGEVVKINGEEVHAHTTNGKTVVANIANVFPKDTEAPPGGVDDMTKLSYLHEPGVLNNLAMRYELNEIYTYTGNILIAVNPFQRLPHLYDTHMMEQYKGAGFGELSPHVFAIAEVAYRAMINEGKSNSILVSGESGAGKTETTKMLMRYLAYLGGRSGVEGRTVEQQVLESNPVLEAFGNAKTLRNNNSSRFGKFVELQFDNCGRISGAAVRTYLLERSRVCQISDPERNYHCFYLLCAAPPEEREKFKLGDPKLFHYLNQSKCYKLDGVDDTEEYLATRRAMDIVGISEEEQDAIFRVVAAILHLGNVNFAKGKEIDSSVLKDEKSRYHLDVCAELLRCDAKKMEDALIKRVMVTPEEVITRTLDPDSATGSRDALAKTIYSRLFDWLVDKINNSIGQDPNSKTIIGVLDIYGFESFKINSFEQFCINFTNEKLQQHFNQHVFKMEQEDYTKEEINWSYIEFVDNKDVLELIEKKPGGVIALLDEACMFPKSTHETFAQKLYQTFKNYKRFTKPKLSRTSFAISHYAGEVTYQADLFLDKNKDYVVAEHQDLLIASSDTFVAGLFPRLPEETSSKTKFSSIGSRFKLQLQSLMETLSSTEPHYIRCVKPNNVLKPAIFENVNVIQQLRCGGVLEAIRISCAGYPTKRTFYEFLNRFGVLAPEVLEGNYDDKVACKMLLDKIGLKGYELGKTKVFLRAGQMAELDARRAEVLGNAARRIQRQSRTFIACKEFRALRGAAIVLQSNCRGKLACNLYEEMRRQAAAVKIQKIFRRHIARESYLRIRHSTITVQTALRGMVARNEFRFRKQMKAATIIQARLRSHLTHSYYKQLQKAALSTQCGWRSRVARKELRTLKMAARDTGALREAKDKLEKRVEELTWRLQLEKRQRTELEEAKTQEYAKQQEALETMRLQVEEANAAVIREREAARKAIEEAPPVIKETPVLVEDTEKINSLTSEVEALKASLQAERQAAENLRKAFSEAEARNSELATELENATRKADQLHESVQRLEEKLSNSESEIQVLRQQALAISPTSRTMATRSKTMLLPRTPENGNYLNGGTKTTPDMTLAVREPESEEKPQKHLNEKQQENQDLLVKCISQNLGYNGDKPVAACVIYKCLLHWRSFEVERTSVFDRIIQTIATAIEVPDNNEVLAYWLSNSATLLLLLQRTLKATGAASLTPQRRRTTSASLFGRMSQGLRGSPQSAGLSFLNRQGLTKLDDLRQVEAKYPALLFKQQLTAFLEKIYGMIRDNLKKEISPLLGLCIQAPRTSRASLVKGRAQANAVAQQALIAHWQSIRKSLNSYLNLMKANNAPPFLVRKVFTQIFSFINVQLFNSLLLRRECCSFSNGEYVKAGLAELEQWCIEATDEYAGSAWDELRHIRQAVGFLVIHQKPKKTLDEITRELCPVLSIQQLYRISTMYWDDKYGTHSVSSDVIANMRVMMTEDSNNAVSSSFLLDDDSSIPFTVEDISKSMQQVDVNDIEPPQLIRENSGFGFLLTRKEGSTS.

Residues 8–57 (IVGSHVWIEDPGAAWIDGEVVKINGEEVHAHTTNGKTVVANIANVFPKDT) form the Myosin N-terminal SH3-like domain. Positions 62–732 (GGVDDMTKLS…QMAELDARRA (671 aa)) constitute a Myosin motor domain. Residues 156-163 (GESGAGKT) and 209-217 (NNNSSRFGK) contribute to the ATP site. Actin-binding regions lie at residues 495–529 (LIEKKPGGVIALLDEACMFPKSTHETFAQKLYQTF), 531–554 (NYKRFTKPKLSRTSFAISHYAGEV), 589–613 (FPRLPEETSSKTKFSSIGSRFKLQL), and 613–635 (LQSLMETLSSTEPHYIRCVKPNN). IQ domains follow at residues 758–787 (LRGAAIVLQSNCRGKLACNLYEEMRRQAAA), 783–812 (RQAAAVKIQKIFRRHIARESYLRIRHSTIT), 806–835 (IRHSTITVQTALRGMVARNEFRFRKQMKAA), 831–860 (QMKAATIIQARLRSHLTHSYYKQLQKAALS), and 854–883 (LQKAALSTQCGWRSRVARKELRTLKMAARD). Residues 884–1056 (TGALREAKDK…VLRQQALAIS (173 aa)) are a coiled coil. The segment at 1071 to 1090 (LPRTPENGNYLNGGTKTTPD) is disordered. Positions 1076 to 1090 (ENGNYLNGGTKTTPD) are enriched in polar residues. The region spanning 1159 to 1470 (DRIIQTIATA…IANMRVMMTE (312 aa)) is the Dilute domain. Phosphoserine is present on S1517.

This sequence belongs to the TRAFAC class myosin-kinesin ATPase superfamily. Myosin family. Plant myosin class XI subfamily. Homodimer. Interacts with MYOB1, MYOB2 and MYOB3. Interacts with PHOX1 and PHOX2. In terms of tissue distribution, expressed ubiquitously.

It is found in the cytoplasm. Functionally, myosin heavy chain that is required for the cell cycle-regulated transport of various organelles and proteins for their segregation. Functions by binding with its tail domain to receptor proteins on organelles and exerting force with its N-terminal motor domain against actin filaments, thereby transporting its cargo along polarized actin cables. Involved in the tip growth of root hair cells and in the elongation of trichome stalk and branches. Plays a major role in trafficking of Golgi stacks, mitochondria and peroxisomes during root hair development. Acts as the primary contributor to ER streaming with a major role in the movement of Golgi bodies. Required for development of pavement cells, trichomes, and stigmatic papillae. Together with XI-F, required for the regulation of organ bending, such as gravitropic root bending. This Arabidopsis thaliana (Mouse-ear cress) protein is Myosin-17.